Reading from the N-terminus, the 533-residue chain is Probable bifunctional tRNA threonylcarbamoyladenosine biosynthesis protein (533 aa).

A kae1 region spans residues 1 to 329 (MTRVLGIEGT…FRPDEVPVSW (329 aa)). The Fe cation site is built by His-113 and His-117. L-threonylcarbamoyladenylate is bound by residues 134–138 (NASGA), Asp-166, Gly-179, Glu-183, and Asn-262. Asp-290 is a Fe cation binding site. The Protein kinase domain maps to 338 to 533 (PVPTDERRQG…REIETRGRYQ (196 aa)). ATP is bound by residues 345–352 (RQGAEAVV) and Lys-363. Asp-452 functions as the Proton acceptor; for kinase activity in the catalytic mechanism.

The protein in the N-terminal section; belongs to the KAE1 / TsaD family. This sequence in the C-terminal section; belongs to the protein kinase superfamily. Tyr protein kinase family. BUD32 subfamily. As to quaternary structure, component of the KEOPS complex that consists of Kae1, Bud32, Cgi121 and Pcc1; the whole complex dimerizes. Fe(2+) is required as a cofactor.

The protein localises to the cytoplasm. The enzyme catalyses L-seryl-[protein] + ATP = O-phospho-L-seryl-[protein] + ADP + H(+). The catalysed reaction is L-threonyl-[protein] + ATP = O-phospho-L-threonyl-[protein] + ADP + H(+). It carries out the reaction L-threonylcarbamoyladenylate + adenosine(37) in tRNA = N(6)-L-threonylcarbamoyladenosine(37) in tRNA + AMP + H(+). Required for the formation of a threonylcarbamoyl group on adenosine at position 37 (t(6)A37) in tRNAs that read codons beginning with adenine. Is a component of the KEOPS complex that is probably involved in the transfer of the threonylcarbamoyl moiety of threonylcarbamoyl-AMP (TC-AMP) to the N6 group of A37. The Kae1 domain likely plays a direct catalytic role in this reaction. The Bud32 domain probably displays kinase activity that regulates Kae1 function. The polypeptide is Probable bifunctional tRNA threonylcarbamoyladenosine biosynthesis protein (Natronomonas pharaonis (strain ATCC 35678 / DSM 2160 / CIP 103997 / JCM 8858 / NBRC 14720 / NCIMB 2260 / Gabara) (Halobacterium pharaonis)).